The sequence spans 122 residues: MSFKKIIKAFVIMAALVSVQAHAGASQFFKDNCNRTTASLVEGVELTKYISDINNNTDGMYVVSSTGGVWRISRAKDYPDNVMTAEMRKIAMAAVLSGMRVNMCASPASSPNVIWAIELEAE.

A signal peptide spans 1 to 23; that stretch reads MSFKKIIKAFVIMAALVSVQAHA. Cys33 and Cys104 are disulfide-bonded.

In terms of assembly, heterohexamer of one A chain and of five B chains.

In terms of biological role, the biological activity of the toxin is produced by the A chain, which activates intracellular adenyl cyclase. The polypeptide is Heat-labile enterotoxin IIB, B chain (Escherichia coli).